A 119-amino-acid polypeptide reads, in one-letter code: Large ribosomal subunit protein bL20 (119 aa).

The protein belongs to the bacterial ribosomal protein bL20 family.

In terms of biological role, binds directly to 23S ribosomal RNA and is necessary for the in vitro assembly process of the 50S ribosomal subunit. It is not involved in the protein synthesizing functions of that subunit. The chain is Large ribosomal subunit protein bL20 from Anoxybacillus flavithermus (strain DSM 21510 / WK1).